The chain runs to 477 residues: Small ribosomal subunit protein uS5m (477 aa).

Belongs to the universal ribosomal protein uS5 family. In terms of assembly, component of the mitochondrial small ribosomal subunit (mt-SSU). Mature N.crassa 74S mitochondrial ribosomes consist of a small (37S) and a large (54S) subunit. The 37S small subunit contains a 16S ribosomal RNA (16S mt-rRNA) and 32 different proteins. The 54S large subunit contains a 23S rRNA (23S mt-rRNA) and 42 different proteins. uS3m, uS4m and uS5m form the narrow entry site of the mRNA channel.

It localises to the mitochondrion. Its function is as follows. Component of the mitochondrial ribosome (mitoribosome), a dedicated translation machinery responsible for the synthesis of mitochondrial genome-encoded proteins, including at least some of the essential transmembrane subunits of the mitochondrial respiratory chain. The mitoribosomes are attached to the mitochondrial inner membrane and translation products are cotranslationally integrated into the membrane. This is Small ribosomal subunit protein uS5m (mrps5) from Neurospora crassa (strain ATCC 24698 / 74-OR23-1A / CBS 708.71 / DSM 1257 / FGSC 987).